Reading from the N-terminus, the 338-residue chain is Lipoate-protein ligase A (338 aa).

In terms of domain architecture, BPL/LPL catalytic spans 29–216 (PATQRVLFLW…AFFAHYGERI (188 aa)). ATP contacts are provided by residues Arg-71, 76-79 (GAVF), and Lys-134. Lys-134 is a (R)-lipoate binding site.

The protein belongs to the LplA family. Monomer.

It localises to the cytoplasm. The catalysed reaction is L-lysyl-[lipoyl-carrier protein] + (R)-lipoate + ATP = N(6)-[(R)-lipoyl]-L-lysyl-[lipoyl-carrier protein] + AMP + diphosphate + H(+). It functions in the pathway protein modification; protein lipoylation via exogenous pathway; protein N(6)-(lipoyl)lysine from lipoate: step 1/2. Its pathway is protein modification; protein lipoylation via exogenous pathway; protein N(6)-(lipoyl)lysine from lipoate: step 2/2. Functionally, catalyzes both the ATP-dependent activation of exogenously supplied lipoate to lipoyl-AMP and the transfer of the activated lipoyl onto the lipoyl domains of lipoate-dependent enzymes. In Salmonella paratyphi A (strain ATCC 9150 / SARB42), this protein is Lipoate-protein ligase A.